The sequence spans 310 residues: Putative methyltransferase mtx subunit H (310 aa).

The protein belongs to the MtrH family. May be part of a complex composed of 3 subunits; MtxA, MtxH and MtxX.

The chain is Putative methyltransferase mtx subunit H (mtxH) from Methanosarcina barkeri (strain Fusaro / DSM 804).